The chain runs to 346 residues: Ribulose-5-phosphate reductase (346 aa).

Zn(2+) contacts are provided by Cys45, His71, Glu72, and Glu151.

Belongs to the zinc-containing alcohol dehydrogenase family. The cofactor is Zn(2+).

The catalysed reaction is D-ribitol 5-phosphate + NADP(+) = D-ribulose 5-phosphate + NADPH + H(+). Its pathway is cell wall biogenesis; poly(ribitol phosphate) teichoic acid biosynthesis. Functionally, catalyzes the NADPH dependent reduction of D-ribulose 5-phosphate to D-ribitol 5-phosphate. The sequence is that of Ribulose-5-phosphate reductase from Streptococcus pneumoniae (strain ATCC BAA-255 / R6).